Here is a 349-residue protein sequence, read N- to C-terminus: MHLLLAAGFGLLLLLLPPPAASKKPTQCQRCRTLVDKFNQGMANTARKNFGGGNTAWEEKTLSKYEFSEIRLLEIMEGLCDSSDFECNQLLEQQEEQLEAWWQSLKKDYPNLFEWFCVRTLKACCLPGTYGPDCKECQGGSERPCSGNGYCSGDGSRQGDGSCQCHAGYKGPLCIDCMDGYFSLQRNETHSICLACDESCKTCSGPSNKDCVQCEVGWARVEDACVDVDECAAETPPCSEAQYCENVNGSYICEECDSTCVGCTGKGPANCKECIAGYTKQSGQCADIDECSLEEKACKRRNENCYNVPGSFVCVCPDGFEETEDACVQTAQSEVTEENPTQPLSHEDL.

The signal sequence occupies residues 1 to 22 (MHLLLAAGFGLLLLLLPPPAAS). The CXXC motif lies at 28–31 (CQRC). 4 cysteine pairs are disulfide-bonded: cysteine 28-cysteine 31, cysteine 137-cysteine 151, cysteine 145-cysteine 163, and cysteine 165-cysteine 174. Residues 133-175 (DCKECQGGSERPCSGNGYCSGDGSRQGDGSCQCHAGYKGPLCI) enclose the EGF-like 1 domain. Asparagine 187 carries N-linked (GlcNAc...) asparagine glycosylation. The stretch at 190–237 (HSICLACDESCKTCSGPSNKDCVQCEVGWARVEDACVDVDECAAETPP) is one FU 1 repeat. Residue asparagine 248 is glycosylated (N-linked (GlcNAc...) asparagine). The stretch at 250–297 (SYICEECDSTCVGCTGKGPANCKECIAGYTKQSGQCADIDECSLEEKA) is one FU 2 repeat. A CXXC motif is present at residues 260–263 (CVGC). Disulfide bonds link cysteine 260-cysteine 263, cysteine 291-cysteine 305, cysteine 298-cysteine 314, and cysteine 316-cysteine 327. In terms of domain architecture, EGF-like 2; calcium-binding spans 287–328 (DIDECSLEEKACKRRNENCYNVPGSFVCVCPDGFEETEDACV).

The protein belongs to the CRELD family. As to quaternary structure, interacts with Chrna4. Component of a complex containing at least Creld2, Manf, Matn3 and Pdia4. Broadly expressed in brain (at protein level).

It is found in the endoplasmic reticulum. The catalysed reaction is Catalyzes the rearrangement of -S-S- bonds in proteins.. In terms of biological role, protein disulfide isomerase. Might play a role in the unfolded protein response. May regulate transport of alpha4-beta2 neuronal acetylcholine receptor. This Rattus norvegicus (Rat) protein is Protein disulfide isomerase Creld2 (Creld2).